The primary structure comprises 105 residues: Blood plasma apolipoprotein LAL1 (105 aa).

Residues 1–21 (MKLHVAALATLAVVCILAAGS) form the signal peptide. Residues 22-29 (EAAPKAMS) constitute a propeptide that is removed on maturation.

As to expression, plasma.

The protein resides in the secreted. The protein is Blood plasma apolipoprotein LAL1 of Petromyzon marinus (Sea lamprey).